We begin with the raw amino-acid sequence, 982 residues long: Mitochondrial DNA mismatch repair protein mutS homolog (982 aa).

Residue Ser-698–Ser-705 participates in ATP binding. The region spanning Cys-905–Arg-951 is the HNH domain.

It belongs to the DNA mismatch repair MutS family.

The protein localises to the mitochondrion. Functionally, may be involved in DNA-mismatch repair. The polypeptide is Mitochondrial DNA mismatch repair protein mutS homolog (Sarcophyton glaucum (Toadstool umbrella leather coral)).